The following is a 276-amino-acid chain: NAD(+)--protein-threonine ADP-ribosyltransferase (276 aa).

In terms of assembly, interacts directly with host ubiquitin.

The protein resides in the secreted. It is found in the host cell. It carries out the reaction L-threonyl-[protein] + NAD(+) = O-(ADP-D-ribosyl)-L-threonyl-[protein] + nicotinamide + H(+). Its function is as follows. ADP-ribosyltransferase that specifically modifies host ubiquitin on 'Thr-66' residue, which causes the shutdown of polyubiquitin synthesis and disrupts the recognition and reversal of polyubiquitin in host cells during infection. Threonine ADP-ribosylation of ubiquitin prevents the transfer of ubiquitin from ubiquitin-activating enzyme E1 to ubiquitin-conjugating enzyme E2, which inhibits subsequent ubiquitin activation and leads to the shutdown of polyubiquitin synthesis in host cells. The modification also causes dysfunction of polyubiquitin chains in cells, thereby blocking host ubiquitin signaling. ADP-ribosylation by CteC is likely irreversible. Plays a crucial role in bacterial colonization in mice during infection. The chain is NAD(+)--protein-threonine ADP-ribosyltransferase from Chromobacterium violaceum (strain ATCC 12472 / DSM 30191 / JCM 1249 / CCUG 213 / NBRC 12614 / NCIMB 9131 / NCTC 9757 / MK).